Reading from the N-terminus, the 299-residue chain is Oxygen-dependent coproporphyrinogen-III oxidase (299 aa).

Residue Ser-92 participates in substrate binding. A divalent metal cation is bound by residues His-96 and His-106. The active-site Proton donor is the His-106. 108 to 110 (NVR) contacts substrate. A divalent metal cation-binding residues include His-145 and His-175. The segment at 240-275 (YVEFNLVWDRGTLFGLQTGGRTESILMSMPPLVRWE) is important for dimerization. 258–260 (GGR) contributes to the substrate binding site.

Belongs to the aerobic coproporphyrinogen-III oxidase family. Homodimer. It depends on a divalent metal cation as a cofactor.

The protein resides in the cytoplasm. The catalysed reaction is coproporphyrinogen III + O2 + 2 H(+) = protoporphyrinogen IX + 2 CO2 + 2 H2O. The protein operates within porphyrin-containing compound metabolism; protoporphyrin-IX biosynthesis; protoporphyrinogen-IX from coproporphyrinogen-III (O2 route): step 1/1. In terms of biological role, involved in the heme biosynthesis. Catalyzes the aerobic oxidative decarboxylation of propionate groups of rings A and B of coproporphyrinogen-III to yield the vinyl groups in protoporphyrinogen-IX. The polypeptide is Oxygen-dependent coproporphyrinogen-III oxidase (Salmonella enteritidis PT4 (strain P125109)).